We begin with the raw amino-acid sequence, 353 residues long: UPF0283 membrane protein YcjF (353 aa).

Residues 16 to 35 (KEESTSAFKAQQTFSEAESR) are disordered. Residues 20–31 (TSAFKAQQTFSE) show a composition bias toward polar residues. 3 helical membrane passes run 70 to 90 (MVMGGLALFGASVVGQGVQWT), 100 to 120 (VALGGCAAGALIIGAGVGSVV), and 213 to 233 (ESTLMIAVSPLALVDMAFIAW).

This sequence belongs to the UPF0283 family.

The protein localises to the cell inner membrane. The protein is UPF0283 membrane protein YcjF of Salmonella heidelberg (strain SL476).